The chain runs to 322 residues: Ubiquitin-conjugating enzyme E2 U (322 aa).

Positions 4 to 153 (RAYLLLQRDF…LKLFNRPLQM (150 aa)) constitute a UBC core domain. Residue Cys-89 is the Glycyl thioester intermediate of the active site.

This sequence belongs to the ubiquitin-conjugating enzyme family. Post-translationally, autoubiquitinated in vitro in the presence of UBR5.

It catalyses the reaction S-ubiquitinyl-[E1 ubiquitin-activating enzyme]-L-cysteine + [E2 ubiquitin-conjugating enzyme]-L-cysteine = [E1 ubiquitin-activating enzyme]-L-cysteine + S-ubiquitinyl-[E2 ubiquitin-conjugating enzyme]-L-cysteine.. The protein operates within protein modification; protein ubiquitination. In terms of biological role, catalyzes the covalent attachment of ubiquitin to other proteins. The chain is Ubiquitin-conjugating enzyme E2 U (UBE2U) from Macaca fascicularis (Crab-eating macaque).